A 274-amino-acid polypeptide reads, in one-letter code: uncharacterized protein (274 aa).

The span at 1–17 (MTQLTNFSESFSNQNSN) shows a compositional bias: low complexity. 2 disordered regions span residues 1-38 (MTQL…YYVR) and 222-274 (ELGT…MEFE). Polar residues predominate over residues 18 to 28 (LHQPYNFNSHQ). The span at 29-38 (PPEENHYYVR) shows a compositional bias: basic and acidic residues. 2 stretches are compositionally biased toward polar residues: residues 239-249 (PMASPTGSSQI) and 256-265 (SPNSLTNGSV).

This is an uncharacterized protein from Caenorhabditis elegans.